We begin with the raw amino-acid sequence, 793 residues long: E3 UFM1-protein ligase 1 (793 aa).

A required for E3 UFM1-protein ligase activity region spans residues 2–212 (AADWEEIRRL…INNLLNLYGF (211 aa)). Disordered stretches follow at residues 405–472 (ALLE…RNKL) and 745–793 (GAEK…SVTE). Over residues 427-439 (EGGGSVKSGGGGN) the composition is skewed to gly residues. Residues 767–781 (SLQRELHSLSRDIKD) are compositionally biased toward basic and acidic residues.

Belongs to the UFL1 family. Catalytic component of the UFM1 ribosome E3 ligase (UREL) complex. Interacts with E2-like enzyme UFC1.

Its subcellular location is the endoplasmic reticulum membrane. It localises to the cytoplasm. The protein resides in the cytosol. It is found in the nucleus. The protein localises to the chromosome. Functionally, E3 protein ligase that mediates ufmylation, the covalent attachment of the ubiquitin-like modifier UFM1 to lysine residues on target proteins, and which plays a key role in various processes, such as ribosome recycling, response to DNA damage, interferon response or reticulophagy (also called ER-phagy). As part of the UREL complex, plays a key role in ribosome recycling by catalyzing mono-ufmylation of RPL26/uL24 subunit of the 60S ribosome. Ufmylation of RPL26/uL24 occurs on free 60S ribosomes following ribosome dissociation: it weakens the junction between post-termination 60S subunits and SEC61 translocons, promoting release and recycling of the large ribosomal subunit from the endoplasmic reticulum membrane. Ufmylation of RPL26/uL24 and subsequent 60S ribosome recycling either take place after normal termination of translation or after ribosome stalling during cotranslational translocation at the endoplasmic reticulum. Involved in reticulophagy in response to endoplasmic reticulum stress by mediating ufmylation of proteins such as CYB5R3 and RPN1, thereby promoting lysosomal degradation of ufmylated proteins. Ufmylation in response to endoplasmic reticulum stress is essential for processes such as hematopoiesis, blood vessel morphogenesis or inflammatory response. In Danio rerio (Zebrafish), this protein is E3 UFM1-protein ligase 1.